The primary structure comprises 378 residues: tRNA-specific 2-thiouridylase MnmA (378 aa).

ATP contacts are provided by residues 9-16 (GVSGGVDS) and Met-35. The interaction with target base in tRNA stretch occupies residues 94–96 (NPD). Cys-99 serves as the catalytic Nucleophile. Cysteines 99 and 195 form a disulfide. Residue Gly-123 coordinates ATP. An interaction with tRNA region spans residues 145–147 (KDQ). Cys-195 functions as the Cysteine persulfide intermediate in the catalytic mechanism. Residues 307–308 (RY) are interaction with tRNA.

Belongs to the MnmA/TRMU family.

It is found in the cytoplasm. The catalysed reaction is S-sulfanyl-L-cysteinyl-[protein] + uridine(34) in tRNA + AH2 + ATP = 2-thiouridine(34) in tRNA + L-cysteinyl-[protein] + A + AMP + diphosphate + H(+). Functionally, catalyzes the 2-thiolation of uridine at the wobble position (U34) of tRNA, leading to the formation of s(2)U34. In Xanthomonas oryzae pv. oryzae (strain MAFF 311018), this protein is tRNA-specific 2-thiouridylase MnmA.